An 87-amino-acid chain; its full sequence is Cytochrome c6 (87 aa).

4 residues coordinate heme c: C10, C13, H14, and M56.

This sequence belongs to the cytochrome c family. PetJ subfamily. As to quaternary structure, monomer. In terms of processing, binds 1 heme c group covalently per subunit.

The protein localises to the plastid. It is found in the chloroplast thylakoid lumen. In terms of biological role, functions as an electron carrier between membrane-bound cytochrome b6-f and photosystem I in oxygenic photosynthesis. This is Cytochrome c6 (petJ) from Euglena viridis (Cercaria viridis).